Reading from the N-terminus, the 137-residue chain is Large ribosomal subunit protein uL16c (137 aa).

This sequence belongs to the universal ribosomal protein uL16 family. Part of the 50S ribosomal subunit.

It localises to the plastid. It is found in the chloroplast. The sequence is that of Large ribosomal subunit protein uL16c from Bigelowiella natans (Pedinomonas minutissima).